The primary structure comprises 384 residues: tRNA(Met) cytidine acetate ligase (384 aa).

Residues 7–20 (VAEY…HEFL), Gly-101, Asn-153, and Arg-178 each bind ATP.

It belongs to the TmcAL family.

The protein localises to the cytoplasm. It carries out the reaction cytidine(34) in elongator tRNA(Met) + acetate + ATP = N(4)-acetylcytidine(34) in elongator tRNA(Met) + AMP + diphosphate. Catalyzes the formation of N(4)-acetylcytidine (ac(4)C) at the wobble position of elongator tRNA(Met), using acetate and ATP as substrates. First activates an acetate ion to form acetyladenylate (Ac-AMP) and then transfers the acetyl group to tRNA to form ac(4)C34. The polypeptide is tRNA(Met) cytidine acetate ligase (Lactobacillus delbrueckii subsp. bulgaricus (strain ATCC 11842 / DSM 20081 / BCRC 10696 / JCM 1002 / NBRC 13953 / NCIMB 11778 / NCTC 12712 / WDCM 00102 / Lb 14)).